A 171-amino-acid polypeptide reads, in one-letter code: Adenine phosphoribosyltransferase (171 aa).

It belongs to the purine/pyrimidine phosphoribosyltransferase family. Homodimer.

The protein resides in the cytoplasm. It carries out the reaction AMP + diphosphate = 5-phospho-alpha-D-ribose 1-diphosphate + adenine. The protein operates within purine metabolism; AMP biosynthesis via salvage pathway; AMP from adenine: step 1/1. In terms of biological role, catalyzes a salvage reaction resulting in the formation of AMP, that is energically less costly than de novo synthesis. In Methylococcus capsulatus (strain ATCC 33009 / NCIMB 11132 / Bath), this protein is Adenine phosphoribosyltransferase.